The chain runs to 111 residues: Universal stress protein B (111 aa).

2 helical membrane-spanning segments follow: residues 1-21 and 90-110; these read MISTIALFWALCVVCVVNMAR and FILTSALCGLVVVSLIALMIW.

The protein belongs to the universal stress protein B family.

It localises to the cell inner membrane. This is Universal stress protein B from Klebsiella pneumoniae (strain 342).